The chain runs to 445 residues: Tripartite motif-containing protein 43B (445 aa).

The RING-type zinc finger occupies 16–57 (CSICQGIFMNPVYLKCGHKFCEACLLLFQEDIKFPAYCPMCM). The segment at 88–129 (SEEHKCVTHKAKKMIFCDKSKILLCHLCSDSQEHSGHTHCSI) adopts a B box-type zinc-finger fold. 4 residues coordinate Zn(2+): C93, H96, C115, and H121. Residues 271 to 445 (RLRAHSIPGL…VRPFFSAVYT (175 aa)) form the B30.2/SPRY domain.

The protein belongs to the TRIM/RBCC family.

This is Tripartite motif-containing protein 43B from Mus musculus (Mouse).